The following is a 391-amino-acid chain: MARVGVLLLNLGGPERIKDVGPFLYNLFSDPEIIRLPVRAFQKPLAWLISLLRSSKSQEAYRSIGGGSPLRRITEQQARELQSYLRNIGIDATTYVAMRYWHPFTESAVADMKADGVSEVVVLPLYPHFSISTSGSSFRELKRLKDSDDEFAELSIRCIRSWFDHPAYVSSMAELIKKQILACDLPQESHVFFTAHGVPKSYVEEAGDPYQDQIQNCSLLIIDQLENSLGFTNSFSLAYQSRVGPEEWLKPYTEEVLEKLGKSGVKELVVVPISFVSEHIETLQEIDIEYKEIAQKNGIVNFKRVPALDIYPLFIEGLADLVSSCLNGEGISLEEASKLPERVKLYPQEKWQWGWNNSSEVWNGRVAMIVFLCFLMELIIGGGPLHQIGLL.

H196 and E281 together coordinate Fe cation.

The protein belongs to the ferrochelatase family.

It is found in the cytoplasm. The enzyme catalyses heme b + 2 H(+) = protoporphyrin IX + Fe(2+). The protein operates within porphyrin-containing compound metabolism; protoheme biosynthesis; protoheme from protoporphyrin-IX: step 1/1. In terms of biological role, catalyzes the ferrous insertion into protoporphyrin IX. This is Ferrochelatase from Prochlorococcus marinus (strain NATL1A).